We begin with the raw amino-acid sequence, 315 residues long: p-hydroxyphenylacetate 3-hydroxylase, reductase component (315 aa).

This sequence belongs to the non-flavoprotein flavin reductase family. As to quaternary structure, homodimer. The p-hydroxyphenylacetate 3-hydroxylase (HpaH) is composed of an oxygenase component C2 and a reductase component C1.

The catalysed reaction is a reduced flavin + NAD(+) = an oxidized flavin + NADH + 2 H(+). It participates in aromatic compound metabolism; 4-hydroxyphenylacetate degradation; pyruvate and succinate semialdehyde from 4-hydroxyphenylacetate: step 1/7. Its activity is regulated as follows. Flavin concentrations greater than 15 uM do not inhibit the NADH oxidation activity of the reductase component C1 but do affect the hydroxylation activity of the C1-C2 complex. Maximal reductase activity is achieved only upon HPA binding to the reductase component C1 before interaction with NADH. HPA stimulates the rates of both the reduction of FMN and release of reduced FMN from the reductase component. In terms of biological role, reductase component of a two-component system that supplies reduced FMN (FMNH2) to the oxygenase component to catalyze the hydroxylation of 4-hydroxyphenylacetic acid, leading to the production of 3,4-dihydroxyphenylacetate (3,4-DHPA). Catalyzes the reduction of free flavins (FMN, FAD and riboflavin) by NADH. Subsequently, the reduced flavins diffuse to the oxygenase component C2. The chain is p-hydroxyphenylacetate 3-hydroxylase, reductase component from Acinetobacter baumannii.